Reading from the N-terminus, the 410-residue chain is Argininosuccinate synthase (410 aa).

Residue 9–17 (AYSGGLDTS) participates in ATP binding. An L-citrulline-binding site is contributed by Tyr86. Residue Gly116 coordinates ATP. L-aspartate is bound by residues Thr118, Asn122, and Asp123. An L-citrulline-binding site is contributed by Asn122. L-citrulline is bound by residues Arg126, Ser174, Glu259, and Tyr271.

The protein belongs to the argininosuccinate synthase family. Type 1 subfamily. Homotetramer.

It localises to the cytoplasm. It catalyses the reaction L-citrulline + L-aspartate + ATP = 2-(N(omega)-L-arginino)succinate + AMP + diphosphate + H(+). The protein operates within amino-acid biosynthesis; L-arginine biosynthesis; L-arginine from L-ornithine and carbamoyl phosphate: step 2/3. The protein is Argininosuccinate synthase of Limosilactobacillus reuteri (strain DSM 20016) (Lactobacillus reuteri).